A 138-amino-acid polypeptide reads, in one-letter code: Proofreading thioesterase EntH (138 aa).

E64 acts as the Nucleophile or proton acceptor in catalysis.

Belongs to the thioesterase PaaI family. In terms of assembly, homotetramer. Dimer of dimers. Interacts specifically with the aryl carrier protein (ArCP) domain of EntB.

Its subcellular location is the cytoplasm. It participates in siderophore biosynthesis; enterobactin biosynthesis. Required for optimal enterobactin synthesis. Acts as a proofreading enzyme that prevents EntB misacylation by hydrolyzing the thioester bound existing between EntB and wrongly charged molecules. The protein is Proofreading thioesterase EntH of Salmonella arizonae (strain ATCC BAA-731 / CDC346-86 / RSK2980).